The following is a 431-amino-acid chain: MAAPMEVVVCTDAAAQLWSCVVWELHSGANLLTYRGGQAGPRGLALLNGEYLLAAQQGKNYICAWELQRKDQLQQKIMCPGPVTCLTTAPNGLYVLAGIAESIYLWEVCTGNLLVILSRHYQDVSCLKFTGDGSHFVSAGKDCLALAWSLCSVLQADPSRILAPRHVWSQHTLPITDLHCGFGGPMARVATASLDQTVKLWAISSGDLLLSVLFDMGITSVTMDLAEHHIFCGGSDGSIFQVDLCSWPGLREHSFQPEQNTGKVFKGHRNQVTCLSVSTDGSVLLSGSHDESVRLWDVKSKQCLRTVTLKGPVTNAAIILAPPSMLNPEFRPSLPLPHFNKHLLGAEHGDEAQGGGLRLQLGLHLQGKEPSYLERLEQLQAVLSSYLEKNMLGSQMLPARVFDLEDEVRSLRKINRDLFDFSTRIITRPSK.

WD repeat units follow at residues 36-75 (GGQA…QLQQ), 78-116 (MCPG…LLVI), 119-158 (RHYQ…QADP), 170-211 (QHTL…LLLS), 213-257 (LFDM…SFQP), and 267-306 (GHRN…CLRT).

This sequence belongs to the WD repeat IPI3/WDR18 family. In terms of assembly, component of the 5FMC complex, at least composed of PELP1, LAS1L, TEX10, WDR18 and SENP3; the complex interacts with methylated CHTOP and ZNF148. Interacts with NOL9. Component of the PELP1 complex, composed of at least PELP1, TEX10 and WDR18. The complex interacts with pre-60S ribosome particles.

The protein resides in the nucleus. The protein localises to the nucleolus. It localises to the nucleoplasm. Its subcellular location is the cytoplasm. It is found in the dynein axonemal particle. Its function is as follows. Functions as a component of the Five Friends of Methylated CHTOP (5FMC) complex; the 5FMC complex is recruited to ZNF148 by methylated CHTOP, leading to desumoylation of ZNF148 and subsequent transactivation of ZNF148 target genes. Component of the PELP1 complex involved in the nucleolar steps of 28S rRNA maturation and the subsequent nucleoplasmic transit of the pre-60S ribosomal subunit. May play a role during development. The polypeptide is WD repeat-containing protein 18 (Wdr18) (Mus musculus (Mouse)).